A 688-amino-acid polypeptide reads, in one-letter code: DNA ligase (688 aa).

NAD(+) contacts are provided by residues 51–55 (DSEYD), 100–101 (SL), and Glu-129. Lys-131 acts as the N6-AMP-lysine intermediate in catalysis. Residues Arg-152, Glu-189, Lys-308, and Lys-332 each coordinate NAD(+). 4 residues coordinate Zn(2+): Cys-426, Cys-429, Cys-444, and Cys-450. The BRCT domain maps to 609-688 (ADEQPLKGQT…DELLALLANS (80 aa)).

This sequence belongs to the NAD-dependent DNA ligase family. LigA subfamily. The cofactor is Mg(2+). It depends on Mn(2+) as a cofactor.

It carries out the reaction NAD(+) + (deoxyribonucleotide)n-3'-hydroxyl + 5'-phospho-(deoxyribonucleotide)m = (deoxyribonucleotide)n+m + AMP + beta-nicotinamide D-nucleotide.. DNA ligase that catalyzes the formation of phosphodiester linkages between 5'-phosphoryl and 3'-hydroxyl groups in double-stranded DNA using NAD as a coenzyme and as the energy source for the reaction. It is essential for DNA replication and repair of damaged DNA. This Shewanella sp. (strain MR-7) protein is DNA ligase.